The following is a 256-amino-acid chain: Small ribosomal subunit protein uS3 (256 aa).

In terms of domain architecture, KH type-2 spans 39–111 (IREFLNENFS…EVILNIIEVR (73 aa)). Positions 219–256 (DTRKPFEAGNQKRGQKRRPRNDQPGQRPQQRNRNSKED) are disordered. The segment covering 240–250 (DQPGQRPQQRN) has biased composition (low complexity).

Belongs to the universal ribosomal protein uS3 family. In terms of assembly, part of the 30S ribosomal subunit. Forms a tight complex with proteins S10 and S14.

Binds the lower part of the 30S subunit head. Binds mRNA in the 70S ribosome, positioning it for translation. The chain is Small ribosomal subunit protein uS3 from Acholeplasma laidlawii (strain PG-8A).